A 179-amino-acid chain; its full sequence is Cell division protein ZapC (179 aa).

This sequence belongs to the ZapC family. In terms of assembly, interacts directly with FtsZ.

The protein localises to the cytoplasm. Contributes to the efficiency of the cell division process by stabilizing the polymeric form of the cell division protein FtsZ. Acts by promoting interactions between FtsZ protofilaments and suppressing the GTPase activity of FtsZ. This Tolumonas auensis (strain DSM 9187 / NBRC 110442 / TA 4) protein is Cell division protein ZapC.